The sequence spans 299 residues: Phosphoribosylaminoimidazole-succinocarboxamide synthase (299 aa).

The protein belongs to the SAICAR synthetase family.

It catalyses the reaction 5-amino-1-(5-phospho-D-ribosyl)imidazole-4-carboxylate + L-aspartate + ATP = (2S)-2-[5-amino-1-(5-phospho-beta-D-ribosyl)imidazole-4-carboxamido]succinate + ADP + phosphate + 2 H(+). It functions in the pathway purine metabolism; IMP biosynthesis via de novo pathway; 5-amino-1-(5-phospho-D-ribosyl)imidazole-4-carboxamide from 5-amino-1-(5-phospho-D-ribosyl)imidazole-4-carboxylate: step 1/2. This chain is Phosphoribosylaminoimidazole-succinocarboxamide synthase, found in Maridesulfovibrio salexigens (strain ATCC 14822 / DSM 2638 / NCIMB 8403 / VKM B-1763) (Desulfovibrio salexigens).